We begin with the raw amino-acid sequence, 182 residues long: NADH-ubiquinone oxidoreductase 20 kDa subunit (182 aa).

Residues cysteine 57, cysteine 58, cysteine 122, and cysteine 152 each contribute to the [4Fe-4S] cluster site.

This sequence belongs to the complex I 20 kDa subunit family. [4Fe-4S] cluster is required as a cofactor.

The protein resides in the mitochondrion. It catalyses the reaction a ubiquinone + NADH + 5 H(+)(in) = a ubiquinol + NAD(+) + 4 H(+)(out). In Reclinomonas americana, this protein is NADH-ubiquinone oxidoreductase 20 kDa subunit (NAD10).